The following is a 338-amino-acid chain: MLDKDKAEKALDLAMSQIEKQFGKGAIMRLGNEEALPDIASIPTGSLSLDIALGVGGVPRGRVIEIFGPESSGKTTLALHVISEAQKLGGIAAFVDAEHALDIGYARKLGVKTDDLLVSQPDTGEQALEIAETLVRSGAIDVLVVDSVAALVPKAEIEGDMGDSHMGLQARLMSQALRKLTGIISKSNCCVIFINQIRMKIGVMFGNPETTTGGNALKFYASVRMDIRKIAALKQGNDMIGSRTRVKVVKNKVAPPFKEVEFDILYGEGISKEGDILDLAVERNVVEKSGAWFSYGKERIGQGRENSRLFLKEHPEITAEIREKLVNPQQDAATPGAA.

An ATP-binding site is contributed by 68 to 75; sequence GPESSGKT.

This sequence belongs to the RecA family.

Its subcellular location is the cytoplasm. In terms of biological role, can catalyze the hydrolysis of ATP in the presence of single-stranded DNA, the ATP-dependent uptake of single-stranded DNA by duplex DNA, and the ATP-dependent hybridization of homologous single-stranded DNAs. It interacts with LexA causing its activation and leading to its autocatalytic cleavage. This Citrifermentans bemidjiense (strain ATCC BAA-1014 / DSM 16622 / JCM 12645 / Bem) (Geobacter bemidjiensis) protein is Protein RecA.